Here is a 95-residue protein sequence, read N- to C-terminus: Exodeoxyribonuclease 7 small subunit (95 aa).

Residues 62–83 show a composition bias toward basic and acidic residues; sequence LTKDESKKTNKTGFRGESKTTE. Residues 62-95 form a disordered region; the sequence is LTKDESKKTNKTGFRGESKTTETKNNTAQEEDLF.

It belongs to the XseB family. Heterooligomer composed of large and small subunits.

It localises to the cytoplasm. The enzyme catalyses Exonucleolytic cleavage in either 5'- to 3'- or 3'- to 5'-direction to yield nucleoside 5'-phosphates.. Functionally, bidirectionally degrades single-stranded DNA into large acid-insoluble oligonucleotides, which are then degraded further into small acid-soluble oligonucleotides. In Leptospira interrogans serogroup Icterohaemorrhagiae serovar copenhageni (strain Fiocruz L1-130), this protein is Exodeoxyribonuclease 7 small subunit.